The primary structure comprises 490 residues: V-type proton ATPase subunit B (490 aa).

R380 lines the ATP pocket.

Belongs to the ATPase alpha/beta chains family. In terms of assembly, V-ATPase is a heteromultimeric enzyme made up of two complexes: the ATP-hydrolytic V1 complex and the proton translocation V0 complex. The V1 complex consists of three catalytic AB heterodimers that form a heterohexamer, three peripheral stalks each consisting of EG heterodimers, one central rotor including subunits D and F, and the regulatory subunits C and H. The proton translocation complex V0 consists of the proton transport subunit a, a ring of proteolipid subunits c9c'', rotary subunit d, subunits e and f, and the accessory subunits VhaAC45 and ATP6AP2. Expressed in Malpighian tubules, rectum, antennal palps and oviduct.

Non-catalytic subunit of the V1 complex of vacuolar(H+)-ATPase (V-ATPase), a multisubunit enzyme composed of a peripheral complex (V1) that hydrolyzes ATP and a membrane integral complex (V0) that translocates protons. V-ATPase is responsible for acidifying and maintaining the pH of intracellular compartments and in some cell types, is targeted to the plasma membrane, where it is responsible for acidifying the extracellular environment. Essential for the proper assembly and activity of V-ATPase. This is V-type proton ATPase subunit B (Vha55) from Drosophila melanogaster (Fruit fly).